Here is a 196-residue protein sequence, read N- to C-terminus: Alpha-crystallin A chain (196 aa).

At methionine 1 the chain carries N-acetylmethionine. The tract at residues 1–63 (MDVTIQHPWF…RTVLDSGISE (63 aa)) is required for complex formation with BFSP1 and BFSP2. A Deamidated glutamine; partial modification is found at glutamine 6. Serine 45 bears the Phosphoserine mark. Glutamine 50 is subject to Deamidated glutamine; partial. The region spanning 76-185 (HAGNPKNNPV…GHSERAIPVS (110 aa)) is the sHSP domain. An N6-acetyllysine mark is found at lysine 93 and lysine 122. Zn(2+) is bound at residue histidine 123. At asparagine 124 the chain carries Deamidated asparagine; partial. The Zn(2+) site is built by glutamate 125 and histidine 130. Phosphoserine is present on serine 145. Asparagine 146 carries the deamidated asparagine; partial modification. The tract at residues 168–196 (KVQSGLDAGHSERAIPVSREEKPSSAPSS) is disordered. Deamidated glutamine; partial is present on glutamine 170. The span at 176-190 (GHSERAIPVSREEKP) shows a compositional bias: basic and acidic residues. Residue histidine 177 participates in Zn(2+) binding. O-linked (GlcNAc) serine glycosylation is present at serine 185.

It belongs to the small heat shock protein (HSP20) family. As to quaternary structure, heteropolymer composed of three CRYAA and one CRYAB subunits. Inter-subunit bridging via zinc ions enhances stability, which is crucial as there is no protein turn over in the lens. Can also form homodimers and homotetramers (dimers of dimers) which serve as the building blocks of homooligomers. Within homooligomers, the zinc-binding motif is created from residues of 3 different molecules. His-123 and Glu-125 from one molecule are ligands of the zinc ion, and His-130 and His-177 residues from additional molecules complete the site with tetrahedral coordination geometry. Part of a complex required for lens intermediate filament formation composed of BFSP1, BFSP2 and CRYAA. In terms of processing, acetylation at Lys-93 may increase chaperone activity. Post-translationally, undergoes age-dependent proteolytical cleavage at the C-terminus.

The protein localises to the cytoplasm. The protein resides in the nucleus. Functionally, contributes to the transparency and refractive index of the lens. Acts as a chaperone, preventing aggregation of various proteins under a wide range of stress conditions. Required for the correct formation of lens intermediate filaments as part of a complex composed of BFSP1, BFSP2 and CRYAA. This Mus musculus (Mouse) protein is Alpha-crystallin A chain (Cryaa).